Here is a 274-residue protein sequence, read N- to C-terminus: Elongation factor Ts (274 aa).

Residues 76–79 (TDFV) are involved in Mg(2+) ion dislocation from EF-Tu.

This sequence belongs to the EF-Ts family.

Its subcellular location is the cytoplasm. Functionally, associates with the EF-Tu.GDP complex and induces the exchange of GDP to GTP. It remains bound to the aminoacyl-tRNA.EF-Tu.GTP complex up to the GTP hydrolysis stage on the ribosome. The chain is Elongation factor Ts from Mycobacterium sp. (strain JLS).